We begin with the raw amino-acid sequence, 371 residues long: MPHHYILTLFGLLPVATNISTWWNFGSMLLTCLALQVLTGFFLAVHYTANINLAFSSIIHITRDVPFGWMMQNLHAIGASMFFICIYIHIARGLYYGSYLNKETWMSGITLLITLMATAFFGYVLPWGQMSFWAATVITNLLTAVPYLGTSLTTWLWGGFAINDPTLTRFFALHFILPFAIISLSSLHIILLHEEGSSNPLGTNPDIDKIPFHPYHSHKDLLLLTLMMLSLLIIVSFFPDIFNDPDNFSKANPLVTPQHIKPEWYFLFAYGILRSIPNKLGGALALVMSIMILFTIPFTHTAHLRPMTFRPFSQLMFWTLVSTFITITWAATKPVEPPFIVISQVTSTLYFTFFLLIPILGWTENKMMNTL.

4 consecutive transmembrane segments (helical) span residues 25-45, 69-90, 105-125, and 170-190; these read FGSM…FLAV, WMMQ…YIHI, WMSG…GYVL, and FFAL…LHII. Heme b contacts are provided by histidine 75 and histidine 89. Residues histidine 174 and histidine 188 each coordinate heme b. Histidine 193 provides a ligand contact to a ubiquinone. The next 4 membrane-spanning stretches (helical) occupy residues 218-238, 280-300, 312-332, and 339-358; these read HKDL…VSFF, LGGA…PFTH, FSQL…WAAT, and FIVI…LLIP.

It belongs to the cytochrome b family. The cytochrome bc1 complex contains 3 respiratory subunits (MT-CYB, CYC1 and UQCRFS1), 2 core proteins (UQCRC1 and UQCRC2) and probably 6 low-molecular weight proteins. The cofactor is heme b.

It localises to the mitochondrion inner membrane. Functionally, component of the ubiquinol-cytochrome c reductase complex (complex III or cytochrome b-c1 complex) that is part of the mitochondrial respiratory chain. The b-c1 complex mediates electron transfer from ubiquinol to cytochrome c. Contributes to the generation of a proton gradient across the mitochondrial membrane that is then used for ATP synthesis. The chain is Cytochrome b (MT-CYB) from Leiopython albertisii (Northern white-lipped python).